Here is an 89-residue protein sequence, read N- to C-terminus: Large ribosomal subunit protein bL27 (89 aa).

It belongs to the bacterial ribosomal protein bL27 family.

The sequence is that of Large ribosomal subunit protein bL27 from Afipia carboxidovorans (strain ATCC 49405 / DSM 1227 / KCTC 32145 / OM5) (Oligotropha carboxidovorans).